The chain runs to 469 residues: MPYALSDKHLKMVSGHLSETDPEVEQIIKDEVDRQKHSIDLIASENFTTTSVFDALGTPLCNKYSEGYPGARYYGGNEHIDRIERLCQQRALEAFHVTPDRWGVNVQTLSGSPANLQVYQALMKPHERLMGLYLPDGGHLSHGYATENRKISAVSTYFESFPYRVNPETGIIDYDTLEKNAILYRPKILVAGTSAYCRLIDYKRMREIADKCGAYLMVDMAHISGLVAAGVIPSPFEYADIVTTTTHKSLRGPRGAMIFFRRGIRSVNQKTGKEIPYDLENPINFSVFPGHQGGPHNHTIAALATALKQAATPEFKEYQTQVLKNAKALENEFQTLGYRLVSNGTDSHMVLVSLREKGVDGARVEYVCEKINIALNKNSIPGDKSALVPGGVRIGAPAMTTRGMGEEDFHRIVRYIDQAVKFAEQTQSSLPKEANKLKDFKAKVDEIADQLAPLKKEIYDWTAEYPLAV.

At Lys-248 the chain carries N6-(pyridoxal phosphate)lysine.

Belongs to the SHMT family. Homotetramer. The cofactor is pyridoxal 5'-phosphate.

It is found in the cytoplasm. The catalysed reaction is (6R)-5,10-methylene-5,6,7,8-tetrahydrofolate + glycine + H2O = (6S)-5,6,7,8-tetrahydrofolate + L-serine. The protein operates within one-carbon metabolism; tetrahydrofolate interconversion. In terms of biological role, interconversion of serine and glycine. This is Serine hydroxymethyltransferase, cytosolic (SHM2) from Candida glabrata (strain ATCC 2001 / BCRC 20586 / JCM 3761 / NBRC 0622 / NRRL Y-65 / CBS 138) (Yeast).